The chain runs to 401 residues: Nodal homolog 3-B (401 aa).

A signal peptide spans Met-1–Ala-18. Residues Met-19–Arg-274 constitute a propeptide that is removed on maturation. N-linked (GlcNAc...) asparagine glycans are attached at residues Asn-168, Asn-337, Asn-341, and Asn-344. 2 disulfide bridges follow: Cys-299–Cys-365 and Cys-328–Cys-396.

Belongs to the TGF-beta family. In terms of assembly, monomer. The propeptide region interacts with bmp4 in a non-covalent manner. As to expression, expressed in the dorsal marginal region of late blastula, becoming restricted to the dorsal blastopore lip (Spemann organizer) at the early gastrula stage.

It localises to the secreted. In terms of biological role, exhibits mesoderm-dorsalizing activity and neural-inducing activity, but lacks mesoderm-inducing activity. Regulates the expression of specific mesodermal and neural genes. Induces convergent extension movements at the embryonic midline by activating the fgf signaling pathway to induce t/bra expression in the organizer region. Acts with wnt11 to induce Spemann organizer cells and induce axis formation. The unprocessed protein antagonizes bmp-signaling. This Xenopus laevis (African clawed frog) protein is Nodal homolog 3-B (nodal3-b).